Here is a 409-residue protein sequence, read N- to C-terminus: Phosphoserine phosphatase SerB2 (409 aa).

2 consecutive ACT domains span residues 8 to 86 (LITV…RSDD) and 102 to 174 (GRPI…DYGL). The Nucleophile role is filled by D185. Mg(2+) contacts are provided by D185 and D187. The Proton donor role is filled by D187. Substrate is bound by residues E194, R230, 273–274 (SG), and K318. A Mg(2+)-binding site is contributed by D341. N344 contributes to the substrate binding site.

Belongs to the HAD-like hydrolase superfamily. SerB family. As to quaternary structure, homodimer. The dimeric population shifts to a tetramer in the presence of L-serine, which inactivates the enzyme. It depends on Mg(2+) as a cofactor. Requires Mn(2+) as cofactor.

The protein localises to the secreted. Its subcellular location is the host cytoplasm. It is found in the host cytosol. It carries out the reaction O-phospho-L-serine + H2O = L-serine + phosphate. The enzyme catalyses O-phospho-D-serine + H2O = D-serine + phosphate. It catalyses the reaction O-phospho-L-seryl-[protein] + H2O = L-seryl-[protein] + phosphate. The catalysed reaction is O-phospho-L-threonyl-[protein] + H2O = L-threonyl-[protein] + phosphate. Its pathway is amino-acid biosynthesis; L-serine biosynthesis; L-serine from 3-phospho-D-glycerate: step 3/3. Clofazimine, a drug being evaluated for XDR and MDR tuberculosis, inhibits SerB2 phosphatase activity and reverses the various functional effects described above and interactions with host proteins. Is inhibited by known PSP inhibitors such as chlorpromazine, DL-AP3 and sodium orthovanadate, but not by okadaic acid. By binding to the ACT domains, amino-acids have various effects on enzyme activity: L-serine and L-glycine act as inhibitors, whereas L-lysine, L-tyrosine and L-phenylalanine are activators. High throughput screen has been performed to identify specific PSP inhibitors with activity against intracellular bacteria; the two best hits identified in this screen, clorobiocin and rosaniline, are bactericidal and kill bacteria in infected macrophages in a dose-dependent manner. Functionally, catalyzes the dephosphorylation of O-phospho-L-serine into L-serine, a step in the L-serine biosynthetic pathway. Exhibits high specificity for L-phosphoserine compared to substrates like L-phosphothreonine (5% relative activity) and L-phosphotyrosine (1.7% relative activity). In terms of biological role, in the host, induces significant cytoskeleton rearrangements through cofilin dephosphorylation and its subsequent activation, and affects the expression of genes that regulate actin dynamics. It specifically interacts with HSP90, HSP70 and HSP27 that block apoptotic pathways but not with other HSPs. Also interacts with GAPDH. It actively dephosphorylates MAP kinase p38 and NF-kappa B p65 (specifically at Ser-536) that play crucial roles in inflammatory and immune responses. This in turn leads to down-regulation of Interleukin 8, a chemotactic and inflammatory cytokine. Thus might help the pathogen to evade the host's immune response. Exogenous addition of purified SerB2 protein to human THP-1 cells (that can be differentiated into macrophage-like cells) induces microtubule rearrangements; the phosphatase activity is co-related to the elicited rearrangements, while addition of the ACT-domains alone elicits no rearrangements. This is Phosphoserine phosphatase SerB2 from Mycobacterium tuberculosis (strain ATCC 25618 / H37Rv).